The chain runs to 273 residues: Thioredoxin-like 1-3, chloroplastic (273 aa).

The N-terminal 44 residues, 1 to 44 (MATDSFIKLNPISFNRARFDLRDFAGISPKSISSLCCISPRLIS), are a transit peptide targeting the chloroplast. Positions 62-202 (LFSKKKIPAF…FKEALEKHGR (141 aa)) constitute a Thioredoxin domain. Active-site nucleophile residues include Cys-125 and Cys-128. Residues Cys-125 and Cys-128 are joined by a disulfide bond.

The protein belongs to the thioredoxin family.

The protein resides in the plastid. It is found in the chloroplast. Functionally, probable thiol-disulfide oxidoreductase that may participate in various redox reactions. This Arabidopsis thaliana (Mouse-ear cress) protein is Thioredoxin-like 1-3, chloroplastic.